Reading from the N-terminus, the 330-residue chain is Ribosomal RNA small subunit methyltransferase H (330 aa).

S-adenosyl-L-methionine-binding positions include 40 to 42, Asp-58, Phe-85, Asp-101, and Gln-108; that span reads GGY.

It belongs to the methyltransferase superfamily. RsmH family.

It localises to the cytoplasm. It catalyses the reaction cytidine(1402) in 16S rRNA + S-adenosyl-L-methionine = N(4)-methylcytidine(1402) in 16S rRNA + S-adenosyl-L-homocysteine + H(+). Its function is as follows. Specifically methylates the N4 position of cytidine in position 1402 (C1402) of 16S rRNA. The polypeptide is Ribosomal RNA small subunit methyltransferase H (Roseobacter denitrificans (strain ATCC 33942 / OCh 114) (Erythrobacter sp. (strain OCh 114))).